Here is a 154-residue protein sequence, read N- to C-terminus: Putative pre-16S rRNA nuclease (154 aa).

It belongs to the YqgF nuclease family.

The protein resides in the cytoplasm. Functionally, could be a nuclease involved in processing of the 5'-end of pre-16S rRNA. The protein is Putative pre-16S rRNA nuclease of Rickettsia akari (strain Hartford).